The primary structure comprises 281 residues: Undecaprenyl-diphosphatase (281 aa).

8 consecutive transmembrane segments (helical) span residues 2-22 (FDLI…FLPV), 46-66 (AFSS…VIQL), 93-113 (VIVG…FMDA), 115-135 (LMNF…FIVI), 152-172 (ITFK…VPGT), 190-210 (FVAA…VTFL), 228-248 (IVML…IKFM), and 259-279 (VFGY…ILGI).

Belongs to the UppP family.

It localises to the cell membrane. It catalyses the reaction di-trans,octa-cis-undecaprenyl diphosphate + H2O = di-trans,octa-cis-undecaprenyl phosphate + phosphate + H(+). Functionally, catalyzes the dephosphorylation of undecaprenyl diphosphate (UPP). Confers resistance to bacitracin. In Leuconostoc mesenteroides subsp. mesenteroides (strain ATCC 8293 / DSM 20343 / BCRC 11652 / CCM 1803 / JCM 6124 / NCDO 523 / NBRC 100496 / NCIMB 8023 / NCTC 12954 / NRRL B-1118 / 37Y), this protein is Undecaprenyl-diphosphatase.